Consider the following 302-residue polypeptide: 4-diphosphocytidyl-2-C-methyl-D-erythritol kinase (302 aa).

Lys32 is an active-site residue. 115 to 125 (PMGGGVGGGSS) provides a ligand contact to ATP. The active site involves Asp157.

The protein belongs to the GHMP kinase family. IspE subfamily.

It carries out the reaction 4-CDP-2-C-methyl-D-erythritol + ATP = 4-CDP-2-C-methyl-D-erythritol 2-phosphate + ADP + H(+). It functions in the pathway isoprenoid biosynthesis; isopentenyl diphosphate biosynthesis via DXP pathway; isopentenyl diphosphate from 1-deoxy-D-xylulose 5-phosphate: step 3/6. Its function is as follows. Catalyzes the phosphorylation of the position 2 hydroxy group of 4-diphosphocytidyl-2C-methyl-D-erythritol. The chain is 4-diphosphocytidyl-2-C-methyl-D-erythritol kinase from Actinobacillus succinogenes (strain ATCC 55618 / DSM 22257 / CCUG 43843 / 130Z).